The sequence spans 101 residues: UPF0213 protein lp_2058 (101 aa).

The 78-residue stretch at Lys15 to Lys92 folds into the GIY-YIG domain.

Belongs to the UPF0213 family.

The protein is UPF0213 protein lp_2058 of Lactiplantibacillus plantarum (strain ATCC BAA-793 / NCIMB 8826 / WCFS1) (Lactobacillus plantarum).